The sequence spans 360 residues: MLYWLTALSDGGDVWNLFRYITFRAGGAFMTALIFGFLFGRPLINVLRRKQGKGQPIRDDGPEGHFSKAGTPTMGGLLIVGALLTSTLLWARWDNPFVWMVLFVTLAYALIGFADDYAKVSKQNTKGVSGKMRLALGVIIAVIAALWASYNHPAELQNQLALPVFKDTLINLGLLYVPFAICVIVGSANAVNLTDGLDGLAIMPAMIAASTLGVIAYAVGRVDFTEYLDVHYVPGTGEILIFTAALFGAGLGFLWYNAPPAAVFMGDTGSLALGGALGAIAVATKHELVLAIVGGLFVVEALSVIIQVLYFKRTGKRVFLMAPIHHHYEKKGWAEPTIVIRFWIISLILAMIGLATLKVR.

The next 10 membrane-spanning stretches (helical) occupy residues 27–47 (GAFMTALIFGFLFGRPLINVL), 71–91 (TPTMGGLLIVGALLTSTLLWA), 93–113 (WDNPFVWMVLFVTLAYALIGF), 134–154 (LALGVIIAVIAALWASYNHPA), 168–188 (TLINLGLLYVPFAICVIVGSA), 199–219 (GLAIMPAMIAASTLGVIAYAV), 239–259 (ILIFTAALFGAGLGFLWYNAP), 262–282 (AVFMGDTGSLALGGALGAIAV), 288–308 (LVLAIVGGLFVVEALSVIIQV), and 337–357 (TIVIRFWIISLILAMIGLATL).

This sequence belongs to the glycosyltransferase 4 family. MraY subfamily. It depends on Mg(2+) as a cofactor.

The protein resides in the cell inner membrane. The enzyme catalyses UDP-N-acetyl-alpha-D-muramoyl-L-alanyl-gamma-D-glutamyl-meso-2,6-diaminopimeloyl-D-alanyl-D-alanine + di-trans,octa-cis-undecaprenyl phosphate = di-trans,octa-cis-undecaprenyl diphospho-N-acetyl-alpha-D-muramoyl-L-alanyl-D-glutamyl-meso-2,6-diaminopimeloyl-D-alanyl-D-alanine + UMP. The protein operates within cell wall biogenesis; peptidoglycan biosynthesis. Functionally, catalyzes the initial step of the lipid cycle reactions in the biosynthesis of the cell wall peptidoglycan: transfers peptidoglycan precursor phospho-MurNAc-pentapeptide from UDP-MurNAc-pentapeptide onto the lipid carrier undecaprenyl phosphate, yielding undecaprenyl-pyrophosphoryl-MurNAc-pentapeptide, known as lipid I. The chain is Phospho-N-acetylmuramoyl-pentapeptide-transferase from Ruegeria pomeroyi (strain ATCC 700808 / DSM 15171 / DSS-3) (Silicibacter pomeroyi).